A 34-amino-acid chain; its full sequence is DDIT3 upstream open reading frame protein (34 aa).

Interacts with DDIT3 (isoform 1).

It localises to the nucleus. It is found in the cytoplasm. Product of the upstream open reading frame (uORF) of DDIT3/CHOP that is specifically produced in absence of stress, thereby preventing translation of downstream stress effector DDIT3/CHOP. The protein is DDIT3 upstream open reading frame protein of Homo sapiens (Human).